The sequence spans 1045 residues: MIEWIIRRSVANRFLVLMGALFLSIWGTWTIINTPVDALPDLSDVQVIIKTSYPGQAPQIVENQVTYPLTTTMLSVPGAKTVRGFSQFGDSYVYVIFEDGTDPYWARSRVLEYLNQVQGKLPAGVSAELGPDATGVGWIYEYALVDRSGKHDLADLRSLQDWFLKYELKTIPDVAEVASVGGVVKEYQVVIDPQRLAQYGISLAEVKSALDASNQEAGGSSIELAEAEYMVRASGYLQTLDDFNHIVLKASENGVPVYLRDVAKIQVGPEMRRGIAELNGEVVGGVVILRSGKNAREVIAAVKDKLETLKSSLPEGVEIVTTYDRSQLIDRAIDNLSGKLLEEFIVVAVVCALFLWHVRSALVAIISLPLGLCIAFIVMHFQGLNANIMSLGGIAIAVGAMVDAAIVMIENAHKRLEEWQHQHPDATLDNKTRWQVITNASVEVGPALFISLLIITLSFIPIFTLEGQEGRLFGPLAFTKTYAMAGAALLAIVVIPILMGYWIRGKIPPESSNPLNRFLIRVYHPLLLKVLHWPKTTLLVAALSVLTVLWPLNKVGGEFLPQINEGDLLYMPSTLPGISAAEAASMLQKTDKLIMSVPEVARVFGKTGKAETATDSAPLEMVETTIQLKPQEQWRPGMTMDKIIEELDNTVRLPGLANLWVPPIRNRIDMLSTGIKSPIGIKVSGTVLADIDAMAEQIEEVARTVPGVASALAERLEGGRYINVEINREKAARYGMTVADVQLFVTSAVGGAMVGETVEGIARYPINLRYPQSWRDSPQALRQLPILTPMKQQITLADVADVKVSTGPSMLKTENARPTSWIYIDARDRDMVSVVHDLQKAIAEKVQLKPGTSVAFSGQFELLERANHKLKLMVPMTLMIIFVLLYLAFRRVGEALLIISSVPFALVGGIWLLWWMGFHLSVATGTGFIALAGVAAEFGVVMLMYLRHAIEAEPSLNNPQTFSEQKLDEALHHGAVLRVRPKAMTVAVIIAGLLPILWGTGAGSEVMSRIAAPMIGGMITAPLLSLFIIPAAYKLMWLHRHRVRK.

A run of 12 helical transmembrane segments spans residues 14-34 (FLVLMGALFLSIWGTWTIINT), 336-356 (LSGKLLEEFIVVAVVCALFLW), 361-381 (ALVAIISLPLGLCIAFIVMHF), 388-408 (IMSLGGIAIAVGAMVDAAIVM), 444-464 (VGPALFISLLIITLSFIPIFT), 483-503 (AMAGAALLAIVVIPILMGYWI), 530-550 (VLHWPKTTLLVAALSVLTVLW), 869-889 (KLKLMVPMTLMIIFVLLYLAF), 896-916 (LLIISSVPFALVGGIWLLWWM), 926-946 (TGFIALAGVAAEFGVVMLMYL), 983-1003 (AMTVAVIIAGLLPILWGTGAG), and 1010-1030 (IAAPMIGGMITAPLLSLFIIP).

Belongs to the resistance-nodulation-cell division (RND) (TC 2.A.6) family. As to quaternary structure, the cus efflux system is composed of CusA, CusB, CusC and CusF.

The protein localises to the cell inner membrane. Part of a cation efflux system that mediates resistance to copper and silver. This Escherichia coli O157:H7 protein is Cation efflux system protein CusA (cusA).